The chain runs to 379 residues: Cytochrome b (379 aa).

Transmembrane regions (helical) follow at residues 33-53 (FGSL…FLAM), 77-98 (WLIR…FIHV), 113-133 (WNIG…GYVL), and 178-198 (FFAF…VHLL). Residues His-83 and His-97 each contribute to the heme b site. Residues His-182 and His-196 each coordinate heme b. His-201 is a binding site for a ubiquinone. The next 4 helical transmembrane spans lie at 226–246 (TKDL…ALFF), 288–308 (LGGV…PLLN), 320–340 (ITQV…WIGG), and 347–367 (XTMI…ILIP).

Belongs to the cytochrome b family. As to quaternary structure, the cytochrome bc1 complex contains 11 subunits: 3 respiratory subunits (MT-CYB, CYC1 and UQCRFS1), 2 core proteins (UQCRC1 and UQCRC2) and 6 low-molecular weight proteins (UQCRH/QCR6, UQCRB/QCR7, UQCRQ/QCR8, UQCR10/QCR9, UQCR11/QCR10 and a cleavage product of UQCRFS1). This cytochrome bc1 complex then forms a dimer. The cofactor is heme b.

Its subcellular location is the mitochondrion inner membrane. In terms of biological role, component of the ubiquinol-cytochrome c reductase complex (complex III or cytochrome b-c1 complex) that is part of the mitochondrial respiratory chain. The b-c1 complex mediates electron transfer from ubiquinol to cytochrome c. Contributes to the generation of a proton gradient across the mitochondrial membrane that is then used for ATP synthesis. In Akodon boliviensis (Bolivian grass mouse), this protein is Cytochrome b (MT-CYB).